The following is a 141-amino-acid chain: Hemoglobin subunit beta-C (141 aa).

One can recognise a Globin domain in the interval 1–141 (PNKALITGFW…VASALAHRYH (141 aa)). Heme b-binding residues include His-58 and His-87.

It belongs to the globin family. In terms of assembly, heterotetramer of two alpha chains and two beta chains. As to expression, red blood cells.

Involved in oxygen transport from the lung to the various peripheral tissues. The protein is Hemoglobin subunit beta-C (HBBC) of Ovis aries musimon (Mouflon).